The chain runs to 612 residues: Dihydroxy-acid dehydratase (612 aa).

Residue D81 coordinates Mg(2+). C122 contacts [2Fe-2S] cluster. Residues D123 and K124 each contribute to the Mg(2+) site. K124 is modified (N6-carboxylysine). Residue C195 coordinates [2Fe-2S] cluster. E491 serves as a coordination point for Mg(2+). The Proton acceptor role is filled by S517.

The protein belongs to the IlvD/Edd family. In terms of assembly, homodimer. Requires [2Fe-2S] cluster as cofactor. Mg(2+) is required as a cofactor.

It carries out the reaction (2R)-2,3-dihydroxy-3-methylbutanoate = 3-methyl-2-oxobutanoate + H2O. It catalyses the reaction (2R,3R)-2,3-dihydroxy-3-methylpentanoate = (S)-3-methyl-2-oxopentanoate + H2O. Its pathway is amino-acid biosynthesis; L-isoleucine biosynthesis; L-isoleucine from 2-oxobutanoate: step 3/4. It functions in the pathway amino-acid biosynthesis; L-valine biosynthesis; L-valine from pyruvate: step 3/4. Its function is as follows. Functions in the biosynthesis of branched-chain amino acids. Catalyzes the dehydration of (2R,3R)-2,3-dihydroxy-3-methylpentanoate (2,3-dihydroxy-3-methylvalerate) into 2-oxo-3-methylpentanoate (2-oxo-3-methylvalerate) and of (2R)-2,3-dihydroxy-3-methylbutanoate (2,3-dihydroxyisovalerate) into 2-oxo-3-methylbutanoate (2-oxoisovalerate), the penultimate precursor to L-isoleucine and L-valine, respectively. The polypeptide is Dihydroxy-acid dehydratase (Rhizobium meliloti (strain 1021) (Ensifer meliloti)).